We begin with the raw amino-acid sequence, 767 residues long: Protein NLP3 (767 aa).

Disordered regions lie at residues 462–494 (ATPP…RKTK), 590–622 (INPT…CSSE), and 646–672 (HEDQ…KAKD). Residues 482 to 566 (SASSLENRKR…MDSVEGVQGS (85 aa)) form the RWP-RK domain. Positions 485-506 (SLENRKRKTKAEKDITLDTLRQ) form a coiled coil. 2 stretches are compositionally biased toward low complexity: residues 604–622 (PSSS…CSSE) and 655–667 (TSSL…ATTP). Residues 673 to 759 (GMKVKAMFGD…ETIRILVHHP (87 aa)) enclose the PB1 domain.

Its subcellular location is the nucleus. Probable transcription factor. This Arabidopsis thaliana (Mouse-ear cress) protein is Protein NLP3 (NLP3).